The following is a 1216-amino-acid chain: ATP-dependent helicase/nuclease subunit A (1216 aa).

The region spanning 26-488 is the UvrD-like helicase ATP-binding domain; that stretch reads QKKTAEQIEA…ILLKENFRSS (463 aa). 47–54 contacts ATP; the sequence is ASAGSGKT. A UvrD-like helicase C-terminal domain is found at 515 to 802; it reads KHQLVFANTK…ELMTIHKSKG (288 aa).

The protein belongs to the helicase family. AddA subfamily. Heterodimer of AddA and AddB/RexB. It depends on Mg(2+) as a cofactor.

The catalysed reaction is Couples ATP hydrolysis with the unwinding of duplex DNA by translocating in the 3'-5' direction.. The enzyme catalyses ATP + H2O = ADP + phosphate + H(+). Functionally, the heterodimer acts as both an ATP-dependent DNA helicase and an ATP-dependent, dual-direction single-stranded exonuclease. Recognizes the chi site generating a DNA molecule suitable for the initiation of homologous recombination. The AddA nuclease domain is required for chi fragment generation; this subunit has the helicase and 3' -&gt; 5' nuclease activities. This is ATP-dependent helicase/nuclease subunit A from Streptococcus pneumoniae (strain Hungary19A-6).